The chain runs to 578 residues: Arginine--tRNA ligase (578 aa).

The short motif at 123–133 is the 'HIGH' region element; the sequence is PNLAKEMHVGH.

The protein belongs to the class-I aminoacyl-tRNA synthetase family. In terms of assembly, monomer.

It is found in the cytoplasm. The catalysed reaction is tRNA(Arg) + L-arginine + ATP = L-arginyl-tRNA(Arg) + AMP + diphosphate. This Hahella chejuensis (strain KCTC 2396) protein is Arginine--tRNA ligase.